Here is a 721-residue protein sequence, read N- to C-terminus: Catalase-peroxidase (721 aa).

The tryptophyl-tyrosyl-methioninium (Trp-Tyr) (with M-238) cross-link spans 89–212 (WHSAGTYRTG…LAAVQMGLIY (124 aa)). H90 (proton acceptor) is an active-site residue. Residues 212–238 (YVNPEGPNGDPDPFAAAVDIRETFARM) constitute a cross-link (tryptophyl-tyrosyl-methioninium (Tyr-Met) (with W-89)). H253 is a heme b binding site.

The protein belongs to the peroxidase family. Peroxidase/catalase subfamily. Homodimer or homotetramer. Heme b serves as cofactor. In terms of processing, formation of the three residue Trp-Tyr-Met cross-link is important for the catalase, but not the peroxidase activity of the enzyme.

The enzyme catalyses H2O2 + AH2 = A + 2 H2O. It carries out the reaction 2 H2O2 = O2 + 2 H2O. Its function is as follows. Bifunctional enzyme with both catalase and broad-spectrum peroxidase activity. The chain is Catalase-peroxidase from Shewanella baltica (strain OS155 / ATCC BAA-1091).